A 64-amino-acid chain; its full sequence is Conotoxin LiC121 (64 aa).

Positions methionine 1–alanine 22 are cleaved as a signal peptide. The propeptide occupies histidine 23–isoleucine 48.

The protein belongs to the conotoxin T superfamily. Post-translationally, contains 2 disulfide bonds that can be either 'C1-C3, C2-C4' or 'C1-C4, C2-C3', since these disulfide connectivities have been observed for conotoxins with cysteine framework V (for examples, see AC P0DQQ7 and AC P81755). Expressed by the venom duct.

It localises to the secreted. This Conus lividus (Livid cone) protein is Conotoxin LiC121.